The primary structure comprises 23 residues: FHPSLWVLIPQYIQLIRKILKSG.

Serine amide is present on Ser22.

Expressed by the venom duct.

It localises to the secreted. Functionally, this cytolytic peptide has ability to disrupt the integrity of cell membranes from both prokaryotes and eukaryotes. It permeabilizes both negatively charged prokaryotic (PE:PG) and zwitterionic eukaryotic (PC:cholesterol) model membranes. It has potent hemolytic activity on human erythrocytes and exhibits low antimicrobial activity against the Gram-negative bacterium E.coli (MIC&gt;50 uM) and the Gram-positive bacterium S.aureus (MIC=25-50 uM). Intracranial injection causes mice to shuffle backward until the encounter an obstacle, at which time the mouse jump into the air. The backward shuffle is reminiscent to the signature dance 'moonwalk' that gained widespread popularity after being performed by Michael Jackson. The sequence is that of Conolysin-Mt1 from Conus mustelinus (Weasel cone).